The sequence spans 979 residues: MRGARGAWDFLCVLLLLLLLGVQTGSSQPSVSPGEPSLPSIHPAKSELIVSVGDELRLSCTDPGFVKWTFETLGQLNENTHNEWITEKAEAGHTGNYTCTNRDGLSRSIYVFVRDPAKLFLVDLPLYGKEGNDTLVRCPLTDPEVTNYSLRGCEGKPLPKDLTFVADPKAGITIRNVKREYHRLCLHCSADQKGRTVLSKKFTLKVRAAIRAVPVVSVSKTSSLLKEGEAFSVMCFIKDVSSFVDSMWIKENSQQTNAQTQSNSWHHGDFNFERQEKLIISSARVNDSGVFMCYANNTFGSANVTTTLEVVDKGFINIFPMMSTTIFVNDGENVDLIVEYEAYPKPEHQQWIYMNRTFTDKWEDYPKSDNESNIRYVSELHLTRLKGNEGGTYTFQVSNSDVNSSVTFNVYVNTKPEILTHESLTNGMLQCVVAGFPEPAVDWYFCPGAEQRCSVPIGPMDVQMQNSSLSPSGKLVVQSSIDYSAFKHNGTVECRAYNNVGRSSAFFNFAFKGNSKEQIHPHTLFTPLLIGFVIAAGMMCIIVMILTYKYLQKPMYEVQWKVVEEINGNNYVYIDPTQLPYDHKWEFPRNRLSFGKTLGAGAFGKVVEATAYGLIKSDAAMTVAVKMLKPSAHLTEREALMSELKVLSYLGNHMNIVNLLGACTVGGPTLVITEYCCYGDLLNFLRRKRDSFICSKQEDHGEVALYKNLLHSKESSCSDSTNEYMDMKPGVSYVVPTKADKRRSARIGSYIERDVTPAIMEDDELALDLEDLLSFSYQVAKGMAFLASKNCIHRDLAARNILLTHGRITKICDFGLARDIKNDSNYVVKGNARLPVKWMAPESIFNCVYTFESDVWSYGIFLWELFSLGSSPYPGMPVDSKFYKMIKEGFRMLSPEHAPAEMYDIMKTCWDADPLKRPTFKQIVQLIEKQISDSTNHIYSNLANCSPNPERPVVDHSVRINSVGSSASSTQPLLVHEDV.

The signal sequence occupies residues 1 to 27; the sequence is MRGARGAWDFLCVLLLLLLLGVQTGSS. Residues 28-527 lie on the Extracellular side of the membrane; sequence QPSVSPGEPS…QIHPHTLFTP (500 aa). 5 Ig-like C2-type domains span residues 29–114, 123–207, 214–311, 320–413, and 416–510; these read PSVS…VFVR, DLPL…LKVR, PVVS…LEVV, PMMS…VYVN, and PEIL…FNFA. Cysteine 60 and cysteine 99 are disulfide-bonded. Asparagine 96, asparagine 132, and asparagine 147 each carry an N-linked (GlcNAc...) asparagine glycan. 3 cysteine pairs are disulfide-bonded: cysteine 138-cysteine 188, cysteine 153-cysteine 185, and cysteine 235-cysteine 293. N-linked (GlcNAc...) asparagine glycosylation is found at asparagine 286, asparagine 296, asparagine 303, asparagine 355, asparagine 370, asparagine 403, asparagine 466, and asparagine 489. An intrachain disulfide couples cysteine 431 to cysteine 494. The chain crosses the membrane as a helical span at residues 528–548; the sequence is LLIGFVIAAGMMCIIVMILTY. The Cytoplasmic portion of the chain corresponds to 549–979; it reads KYLQKPMYEV…TQPLLVHEDV (431 aa). A phosphotyrosine; by autocatalysis mark is found at tyrosine 550, tyrosine 556, tyrosine 571, and tyrosine 573. Tyrosine 571 provides a ligand contact to Mg(2+). An important for interaction with phosphotyrosine-binding proteins region spans residues 571 to 573; sequence YVY. The 349-residue stretch at 592–940 folds into the Protein kinase domain; that stretch reads LSFGKTLGAG…ISDSTNHIYS (349 aa). ATP contacts are provided by residues 599–606, lysine 626, and 674–680; these read GAGAFGKV and EYCCYGD. Tyrosine 706, tyrosine 724, and tyrosine 733 each carry phosphotyrosine; by autocatalysis. Phosphoserine; by PKC/PRKCA occurs at positions 744 and 749. Catalysis depends on aspartate 795, which acts as the Proton acceptor. Residue arginine 799 coordinates ATP. Residues asparagine 800 and aspartate 813 each coordinate Mg(2+). At serine 824 the chain carries Phosphoserine. Tyrosine 826 is subject to Phosphotyrosine; by autocatalysis. Serine 894 is subject to Phosphoserine. Phosphotyrosine; by autocatalysis is present on residues tyrosine 903 and tyrosine 939. Phosphoserine is present on serine 962.

The protein belongs to the protein kinase superfamily. Tyr protein kinase family. CSF-1/PDGF receptor subfamily. Monomer in the absence of bound KITLG/SCF. Homodimer in the presence of bound KITLG/SCF, forming a heterotetramer with two KITLG/SCF molecules. Interacts (via phosphorylated tyrosine residues) with the adapter proteins GRB2 and GRB7 (via SH2 domain), and SH2B2/APS. Interacts (via C-terminus) with MPDZ (via the tenth PDZ domain). Interacts (via phosphorylated tyrosine residues) with PIK3R1 and PIK3 catalytic subunit. Interacts (via phosphorylated tyrosine) with CRK (isoform Crk-II), FYN, SHC1 and MATK/CHK (via SH2 domain). Interacts with LYN and FES/FPS. Interacts (via phosphorylated tyrosine residues) with the protein phosphatases PTPN6/SHP-1 (via SH2 domain), PTPN11/SHP-2 (via SH2 domain) and PTPRU. Interacts with PLCG1. Interacts with DOK1 and TEC. Interacts with IL1RAP (independent of stimulation with KITLG/SCF). A mast cell-specific KITLG/SCF-induced interleukin-33 signaling complex contains IL1RL1, IL1RAP, KIT and MYD88. Post-translationally, ubiquitinated by SOCS6. KIT is rapidly ubiquitinated after autophosphorylation induced by KITLG/SCF binding, leading to internalization and degradation. Autophosphorylated on tyrosine residues. KITLG/SCF binding promotes autophosphorylation. Phosphorylated tyrosine residues are important for interaction with specific binding partners.

It is found in the cell membrane. The catalysed reaction is L-tyrosyl-[protein] + ATP = O-phospho-L-tyrosyl-[protein] + ADP + H(+). Its activity is regulated as follows. Present in an inactive conformation in the absence of bound ligand. KITLG/SCF binding leads to dimerization and activation by autophosphorylation on tyrosine residues. Activity is down-regulated by PRKCA-mediated phosphorylation on serine residues. Functionally, tyrosine-protein kinase that acts as a cell-surface receptor for the cytokine KITLG/SCF and plays an essential role in the regulation of cell survival and proliferation, hematopoiesis, stem cell maintenance, gametogenesis, mast cell development, migration and function, and in melanogenesis. In response to KITLG/SCF binding, KIT can activate several signaling pathways. Phosphorylates PIK3R1, PLCG1, SH2B2/APS and CBL. Activates the AKT1 signaling pathway by phosphorylation of PIK3R1, the regulatory subunit of phosphatidylinositol 3-kinase. Activated KIT also transmits signals via GRB2 and activation of RAS, RAF1 and the MAP kinases MAPK1/ERK2 and/or MAPK3/ERK1. Promotes activation of STAT family members STAT1, STAT3, STAT5A and STAT5B. Activation of PLCG1 leads to the production of the cellular signaling molecules diacylglycerol and inositol 1,4,5-trisphosphate. KIT signaling is modulated by protein phosphatases, and by rapid internalization and degradation of the receptor. Activated KIT promotes phosphorylation of the protein phosphatases PTPN6/SHP-1 and PTPRU, and of the transcription factors STAT1, STAT3, STAT5A and STAT5B. Promotes phosphorylation of PIK3R1, CBL, CRK (isoform Crk-II), LYN, MAPK1/ERK2 and/or MAPK3/ERK1, PLCG1, SRC and SHC1. This chain is Mast/stem cell growth factor receptor Kit (KIT), found in Canis lupus familiaris (Dog).